A 193-amino-acid chain; its full sequence is dTTP/UTP pyrophosphatase (193 aa).

D71 acts as the Proton acceptor in catalysis.

Belongs to the Maf family. YhdE subfamily. It depends on a divalent metal cation as a cofactor.

Its subcellular location is the cytoplasm. It catalyses the reaction dTTP + H2O = dTMP + diphosphate + H(+). The enzyme catalyses UTP + H2O = UMP + diphosphate + H(+). Functionally, nucleoside triphosphate pyrophosphatase that hydrolyzes dTTP and UTP. May have a dual role in cell division arrest and in preventing the incorporation of modified nucleotides into cellular nucleic acids. The protein is dTTP/UTP pyrophosphatase of Dictyoglomus turgidum (strain DSM 6724 / Z-1310).